The chain runs to 715 residues: MKKSLSLFAIFILTFLGLVIPFITLTAFRPLNEEQYTLKQESSTGKGINETDFINTMFLRSSFFENWSETNYFINPTLKTSKNLLFNDKWYLDFLQDSYSTGVVYDKPGEIFLNYYRQWHSLKNKYMVEKFYDVKKENFLNDLTDFIYAFAVKYKMFDVSKEIVENVDRYKENHYPRVKLKQDNWKLITDYNWLKDNFDNKYYFVIWKQSYSKEWEIMKFKHNMRYDMKIESYIKNNSFKGLYRWDGDGEPQTPTIDKNTGEITDWNSYQQSRVKQFIDLSLYSVLQENIRVQQGGSADYENPNKVGTKRIIFDFETVDELDVKNIKKAIYRMILTVDEANLIISGSLELNNINNDDLSFNFSFMRTGMGEVFNFNGSIYSSLNSKDLKYYQQFSGQFDLSKFLQSFFASALVPVFQNRSLFIENGYIDNLQYDTVLVNFFALKLQNFNNILLIENINDKLQFDKLLNSMFKISQKFYTNYLRTIFDLENNTYVQGYNKKYGLLVNNGFKIYPRYFYFSDKYKQLDIKLYSAFKNRFYTINNYGSVFNYDFSVANNYNIKLNSGYVFGGDLQNKYGLQYKKIEEQKIGYNVFELQAQKENDMYRYYDFNFGIYNWQEINNGGLFPDKQWWQVQYVTPKGWWDFGAHIKNAVIWIVNTIPGVKQVNELASGVGKVFETVYSFFSQIFEVWKFNPALYSTITNIFLLIIFMKFVRLI.

Residues 688–708 (VWKFNPALYSTITNIFLLIIF) traverse the membrane as a helical segment.

Belongs to the plectrovirus ORF1 family.

It localises to the host membrane. This is an uncharacterized protein from Spiroplasma virus SpV1-R8A2 B (SpV1).